The primary structure comprises 480 residues: Trigger factor (480 aa).

Residues 161–249 (GDRLLITGKF…VVEVLKEQLP (89 aa)) enclose the PPIase FKBP-type domain. The segment at 426-480 (TEEPVEKEAEEKNEEFAIDHEVLPTKDHDAIPAAKYDDNTPKGAETEDKQEKDKD) is disordered. Positions 429 to 480 (PVEKEAEEKNEEFAIDHEVLPTKDHDAIPAAKYDDNTPKGAETEDKQEKDKD) are enriched in basic and acidic residues.

The protein belongs to the FKBP-type PPIase family. Tig subfamily.

It localises to the cytoplasm. It carries out the reaction [protein]-peptidylproline (omega=180) = [protein]-peptidylproline (omega=0). Functionally, involved in protein export. Acts as a chaperone by maintaining the newly synthesized protein in an open conformation. Functions as a peptidyl-prolyl cis-trans isomerase. This Rhodopirellula baltica (strain DSM 10527 / NCIMB 13988 / SH1) protein is Trigger factor.